A 432-amino-acid chain; its full sequence is Adenylosuccinate synthetase 2 (432 aa).

Residues 12–18 (GDEGKGR) and 40–42 (GHT) each bind GTP. Catalysis depends on Asp13, which acts as the Proton acceptor. Residues Asp13 and Gly40 each contribute to the Mg(2+) site. IMP contacts are provided by residues 13–16 (DEGK), 38–41 (NAGH), Thr128, Arg142, Gln222, Thr237, and Arg301. His41 serves as the catalytic Proton donor. Position 297–303 (297–303 (VNTGRPR)) interacts with substrate. GTP-binding positions include Arg303, 329-331 (KLD), and 411-413 (TTG).

It belongs to the adenylosuccinate synthetase family. As to quaternary structure, homodimer. Mg(2+) is required as a cofactor.

It localises to the cytoplasm. The enzyme catalyses IMP + L-aspartate + GTP = N(6)-(1,2-dicarboxyethyl)-AMP + GDP + phosphate + 2 H(+). The protein operates within purine metabolism; AMP biosynthesis via de novo pathway; AMP from IMP: step 1/2. Plays an important role in the de novo pathway of purine nucleotide biosynthesis. Catalyzes the first committed step in the biosynthesis of AMP from IMP. This Burkholderia lata (strain ATCC 17760 / DSM 23089 / LMG 22485 / NCIMB 9086 / R18194 / 383) protein is Adenylosuccinate synthetase 2.